Consider the following 665-residue polypeptide: DNA ligase (665 aa).

Residues 32–36 (DSEYD), 81–82 (SL), and E110 each bind NAD(+). K112 acts as the N6-AMP-lysine intermediate in catalysis. R133, E167, K283, and K307 together coordinate NAD(+). Zn(2+) contacts are provided by C401, C404, C419, and C424. A BRCT domain is found at 586 to 665 (EGHPDFSGKT…AAFIEKQNGI (80 aa)).

Belongs to the NAD-dependent DNA ligase family. LigA subfamily. Requires Mg(2+) as cofactor. Mn(2+) serves as cofactor.

It carries out the reaction NAD(+) + (deoxyribonucleotide)n-3'-hydroxyl + 5'-phospho-(deoxyribonucleotide)m = (deoxyribonucleotide)n+m + AMP + beta-nicotinamide D-nucleotide.. Functionally, DNA ligase that catalyzes the formation of phosphodiester linkages between 5'-phosphoryl and 3'-hydroxyl groups in double-stranded DNA using NAD as a coenzyme and as the energy source for the reaction. It is essential for DNA replication and repair of damaged DNA. The protein is DNA ligase of Staphylococcus epidermidis (strain ATCC 12228 / FDA PCI 1200).